The following is a 461-amino-acid chain: MQRVNMIMAESPGLITICLLGYLLSAECTVFLDHENANKILNRPKRYNSGKLEEFVQGNLERECMEEKCSFEEAREVFENTERTTEFWKQYVDGDQCESNPCLNGGSCKDDINSYECWCPFGFEGKNCELDVTCNIKNGRCEQFCKNSADNKVVCSCTEGYRLAENQKSCEPAVPFPCGRVSVSQTSKLTRAETVFPDVDYVNSTEAETILDNITQSTQSFNDFTRVVGGEDAKPGQFPWQVVLNGKVDAFCGGSIVNEKWIVTAAHCVETGVKITVVAGEHNIEETEHTEQKRNVIRIIPHHNYNAAINKYNHDIALLELDEPLVLNSYVTPICIADKEYTNIFLKFGSGYVSGWGRVFHKGRSALVLQYLRVPLVDRATCLRSTKFTIYNNMFCAGFHEGGRDSCQGDSGGPHVTEVEGTSFLTGIISWGEECAMKGKYGIYTKVSRYVNWIKEKTKLT.

Residues 1-28 form the signal peptide; it reads MQRVNMIMAESPGLITICLLGYLLSAEC. Residues 29-46 constitute a propeptide that is removed on maturation; that stretch reads TVFLDHENANKILNRPKR. Residues Y47, N48, E53, E54, E61, E63, E66, E67, E72, E73, and E76 each contribute to the Ca(2+) site. Positions 47–92 constitute a Gla domain; sequence YNSGKLEEFVQGNLERECMEEKCSFEEAREVFENTERTTEFWKQYV. 4-carboxyglutamate is present on residues E53, E54, E61, E63, E66, E67, E72, E73, E76, E79, and E82. Position 61 (E61) interacts with Mg(2+). A disulfide bridge links C64 with C69. Residue E66 participates in Mg(2+) binding. E72 contributes to the Mg(2+) binding site. A Mg(2+)-binding site is contributed by E76. E82 is a Ca(2+) binding site. E82 provides a ligand contact to Mg(2+). Residue T85 is glycosylated (O-linked (GalNAc...) threonine). Positions 86, 93, 94, and 96 each coordinate Ca(2+). 4-carboxyglutamate is present on E86. E86 contacts Mg(2+). The region spanning 93 to 129 is the EGF-like 1; calcium-binding domain; it reads DGDQCESNPCLNGGSCKDDINSYECWCPFGFEGKNCE. Disulfide bonds link C97-C108, C102-C117, C119-C128, C134-C145, C141-C155, C157-C170, C178-C335, C252-C268, C382-C396, and C407-C435. Residue S99 is glycosylated (O-linked (Glc...) serine). S107 carries an O-linked (Fuc...) serine glycan. D110 and D111 together coordinate Ca(2+). Residue D110 is modified to (3R)-3-hydroxyaspartate. S114 is subject to Phosphoserine. The EGF-like 2 domain maps to 130–171; the sequence is LDVTCNIKNGRCEQFCKNSADNKVVCSCTEGYRLAENQKSCE. The propeptide at 192–226 is activation peptide; it reads AETVFPDVDYVNSTEAETILDNITQSTQSFNDFTR. At Y201 the chain carries Sulfotyrosine. Residue N203 is glycosylated (N-linked (GlcNAc...) asparagine). S204 carries the post-translational modification Phosphoserine. A Phosphothreonine; alternate modification is found at T205. An O-linked (GalNAc...) threonine; alternate glycan is attached at T205. N213 carries N-linked (GlcNAc...) asparagine glycosylation. 2 O-linked (GalNAc...) threonine glycosylation sites follow: T215 and T225. Positions 227-459 constitute a Peptidase S1 domain; sequence VVGGEDAKPG…YVNWIKEKTK (233 aa). H267 acts as the Charge relay system in catalysis. 5 residues coordinate Ca(2+): E281, N283, E286, E288, and E291. Catalysis depends on D315, which acts as the Charge relay system. S411 functions as the Charge relay system in the catalytic mechanism.

It belongs to the peptidase S1 family. As to quaternary structure, heterodimer of a light chain and a heavy chain; disulfide-linked. Interacts (inactive and activated) with F11 (activated) in calcium-dependent manner. Interacts with SERPINC1. Interacts (activated) with iripin-8, a serine protease inhibitor from Ixodes ricinus saliva. Interacts (inactive and activated) with nitrophorin-2, an anticoagulant protein from Rhodnius prolixus. Post-translationally, activated by factor XIa, which excises the activation peptide. The propeptide can also be removed by snake venom protease. Activated by coagulation factor VIIa-tissue factor (F7-F3) complex in calcium-dependent manner. The iron and 2-oxoglutarate dependent 3-hydroxylation of aspartate and asparagine is (R) stereospecific within EGF domains. Detected in blood plasma (at protein level). Synthesized primarily in the liver and secreted in plasma.

The protein resides in the secreted. The enzyme catalyses Selective cleavage of Arg-|-Ile bond in factor X to form factor Xa.. Its function is as follows. Factor IX is a vitamin K-dependent plasma protein that participates in the intrinsic pathway of blood coagulation by converting factor X to its active form in the presence of Ca(2+) ions, phospholipids, and factor VIIIa. In Homo sapiens (Human), this protein is Coagulation factor IX (F9).